The following is a 248-amino-acid chain: UPF0246 protein RC0754 (248 aa).

Belongs to the UPF0246 family.

The protein is UPF0246 protein RC0754 of Rickettsia conorii (strain ATCC VR-613 / Malish 7).